The following is an 87-amino-acid chain: Phosphoribosyl-ATP pyrophosphatase (87 aa).

Belongs to the PRA-PH family.

It is found in the cytoplasm. It carries out the reaction 1-(5-phospho-beta-D-ribosyl)-ATP + H2O = 1-(5-phospho-beta-D-ribosyl)-5'-AMP + diphosphate + H(+). It functions in the pathway amino-acid biosynthesis; L-histidine biosynthesis; L-histidine from 5-phospho-alpha-D-ribose 1-diphosphate: step 2/9. This Paenarthrobacter aurescens (strain TC1) protein is Phosphoribosyl-ATP pyrophosphatase.